A 57-amino-acid polypeptide reads, in one-letter code: Large ribosomal subunit protein uL30 (57 aa).

Belongs to the universal ribosomal protein uL30 family. In terms of assembly, part of the 50S ribosomal subunit.

In Clostridium acetobutylicum (strain ATCC 824 / DSM 792 / JCM 1419 / IAM 19013 / LMG 5710 / NBRC 13948 / NRRL B-527 / VKM B-1787 / 2291 / W), this protein is Large ribosomal subunit protein uL30.